A 122-amino-acid chain; its full sequence is Large ribosomal subunit protein uL18 (122 aa).

This sequence belongs to the universal ribosomal protein uL18 family. In terms of assembly, part of the 50S ribosomal subunit; part of the 5S rRNA/L5/L18/L25 subcomplex. Contacts the 5S and 23S rRNAs.

Its function is as follows. This is one of the proteins that bind and probably mediate the attachment of the 5S RNA into the large ribosomal subunit, where it forms part of the central protuberance. This Desulforapulum autotrophicum (strain ATCC 43914 / DSM 3382 / VKM B-1955 / HRM2) (Desulfobacterium autotrophicum) protein is Large ribosomal subunit protein uL18.